Reading from the N-terminus, the 544-residue chain is Chaperonin GroEL 2 (544 aa).

Residues Thr29–Pro32, Lys50, Asp86–Thr90, Gly414, and Asp494 each bind ATP.

Belongs to the chaperonin (HSP60) family. As to quaternary structure, forms a cylinder of 14 subunits composed of two heptameric rings stacked back-to-back. Interacts with the co-chaperonin GroES.

Its subcellular location is the cytoplasm. The enzyme catalyses ATP + H2O + a folded polypeptide = ADP + phosphate + an unfolded polypeptide.. Its function is as follows. Together with its co-chaperonin GroES, plays an essential role in assisting protein folding. The GroEL-GroES system forms a nano-cage that allows encapsulation of the non-native substrate proteins and provides a physical environment optimized to promote and accelerate protein folding. The protein is Chaperonin GroEL 2 of Psychromonas ingrahamii (strain DSM 17664 / CCUG 51855 / 37).